We begin with the raw amino-acid sequence, 195 residues long: MCDIKLIVGLANPGAEYAQTRHNAGAWYVEELARIANVSLAPDPKYFGLTARAILCGKDVRLLIPSTFMNLSGKSVAALANFFRIEPEQILVAHDELDMEPGVARFKLGGGHGGHNGLKDIIAKMGNNKNFYRLRIGIGHPGDKNKVSGYVLGKAPATEQEKMNAAIDEAVRSTEILFKQDMTKAMHRLHSFKAE.

A tRNA-binding site is contributed by Tyr-17. His-22 serves as the catalytic Proton acceptor. TRNA-binding residues include Phe-68, Asn-70, and Asn-116.

It belongs to the PTH family. In terms of assembly, monomer.

It localises to the cytoplasm. The enzyme catalyses an N-acyl-L-alpha-aminoacyl-tRNA + H2O = an N-acyl-L-amino acid + a tRNA + H(+). Its function is as follows. Hydrolyzes ribosome-free peptidyl-tRNAs (with 1 or more amino acids incorporated), which drop off the ribosome during protein synthesis, or as a result of ribosome stalling. In terms of biological role, catalyzes the release of premature peptidyl moieties from peptidyl-tRNA molecules trapped in stalled 50S ribosomal subunits, and thus maintains levels of free tRNAs and 50S ribosomes. This is Peptidyl-tRNA hydrolase from Shewanella amazonensis (strain ATCC BAA-1098 / SB2B).